A 150-amino-acid chain; its full sequence is 3-dehydroquinate dehydratase (150 aa).

Y22 functions as the Proton acceptor in the catalytic mechanism. Substrate-binding residues include N73, H79, and D86. H99 functions as the Proton donor in the catalytic mechanism. Residues L100 to S101 and R110 contribute to the substrate site.

It belongs to the type-II 3-dehydroquinase family. In terms of assembly, homododecamer.

The enzyme catalyses 3-dehydroquinate = 3-dehydroshikimate + H2O. It participates in metabolic intermediate biosynthesis; chorismate biosynthesis; chorismate from D-erythrose 4-phosphate and phosphoenolpyruvate: step 3/7. Catalyzes a trans-dehydration via an enolate intermediate. The protein is 3-dehydroquinate dehydratase of Dinoroseobacter shibae (strain DSM 16493 / NCIMB 14021 / DFL 12).